Here is a 323-residue protein sequence, read N- to C-terminus: uncharacterized protein (323 aa).

Residues 4–24 (IIFAFIILFVFLLPMIIFYQP) traverse the membrane as a helical segment.

The protein resides in the membrane. This is an uncharacterized protein from Escherichia coli (strain K12).